A 473-amino-acid chain; its full sequence is Glutamate-1-semialdehyde 2,1-aminomutase, chloroplastic (473 aa).

The transit peptide at 1–37 directs the protein to the chloroplast; it reads MSATLTGSGTALGFSCSSKISKRVSSSPSTRCSIKMS. Residue K313 is modified to N6-(pyridoxal phosphate)lysine.

Belongs to the class-III pyridoxal-phosphate-dependent aminotransferase family. HemL subfamily. In terms of assembly, homodimer. It depends on pyridoxal 5'-phosphate as a cofactor.

Its subcellular location is the plastid. It is found in the chloroplast. It catalyses the reaction (S)-4-amino-5-oxopentanoate = 5-aminolevulinate. It participates in porphyrin-containing compound metabolism; protoporphyrin-IX biosynthesis; 5-aminolevulinate from L-glutamyl-tRNA(Glu): step 2/2. It functions in the pathway porphyrin-containing compound metabolism; chlorophyll biosynthesis. In Brassica napus (Rape), this protein is Glutamate-1-semialdehyde 2,1-aminomutase, chloroplastic (GSA).